Here is a 292-residue protein sequence, read N- to C-terminus: Elongation factor Ts (292 aa).

An involved in Mg(2+) ion dislocation from EF-Tu region spans residues 80–83 (TDFV).

This sequence belongs to the EF-Ts family.

It localises to the cytoplasm. In terms of biological role, associates with the EF-Tu.GDP complex and induces the exchange of GDP to GTP. It remains bound to the aminoacyl-tRNA.EF-Tu.GTP complex up to the GTP hydrolysis stage on the ribosome. The sequence is that of Elongation factor Ts from Ralstonia nicotianae (strain ATCC BAA-1114 / GMI1000) (Ralstonia solanacearum).